The following is a 513-amino-acid chain: uncharacterized protein (513 aa).

A run of 5 helical transmembrane segments spans residues 262–282 (FAIFTDNTPFVLTGPITFWQL), 304–324 (YMFLFVALYLPAIYVAVITYH), 341–361 (EPIPFPAIIEALIMEISFEAL), 382–402 (LVIGTAAVEAGIVSAPMVIIV), and 429–449 (MFLASIFGIFGIMLGTIILVL). Positions 489–513 (PGTYSRGNGQKGAKREDPKDEENNI) are disordered. Positions 501 to 513 (AKREDPKDEENNI) are enriched in basic and acidic residues.

The protein belongs to the GerABKA family.

It is found in the cell membrane. This is an uncharacterized protein from Bacillus subtilis (strain 168).